A 337-amino-acid polypeptide reads, in one-letter code: UDP-3-O-acylglucosamine N-acyltransferase (337 aa).

His-238 serves as the catalytic Proton acceptor.

It belongs to the transferase hexapeptide repeat family. LpxD subfamily. As to quaternary structure, homotrimer.

The catalysed reaction is a UDP-3-O-[(3R)-3-hydroxyacyl]-alpha-D-glucosamine + a (3R)-hydroxyacyl-[ACP] = a UDP-2-N,3-O-bis[(3R)-3-hydroxyacyl]-alpha-D-glucosamine + holo-[ACP] + H(+). The protein operates within bacterial outer membrane biogenesis; LPS lipid A biosynthesis. Its function is as follows. Catalyzes the N-acylation of UDP-3-O-acylglucosamine using 3-hydroxyacyl-ACP as the acyl donor. Is involved in the biosynthesis of lipid A, a phosphorylated glycolipid that anchors the lipopolysaccharide to the outer membrane of the cell. This chain is UDP-3-O-acylglucosamine N-acyltransferase, found in Xanthomonas oryzae pv. oryzae (strain MAFF 311018).